Reading from the N-terminus, the 289-residue chain is Oxaloacetate decarboxylase (289 aa).

Residue Ser-50 participates in substrate binding. Residue Asp-88 coordinates Mg(2+). The substrate site is built by Arg-159 and His-235.

This sequence belongs to the isocitrate lyase/PEP mutase superfamily. Oxaloacetate decarboxylase family. As to quaternary structure, homotetramer; dimer of dimers. It depends on Mg(2+) as a cofactor.

It carries out the reaction oxaloacetate + H(+) = pyruvate + CO2. Functionally, catalyzes the decarboxylation of oxaloacetate into pyruvate. Seems to play a role in maintaining cellular concentrations of bicarbonate and pyruvate. The polypeptide is Oxaloacetate decarboxylase (Pseudomonas syringae pv. tomato (strain ATCC BAA-871 / DC3000)).